Reading from the N-terminus, the 479-residue chain is Aspartyl/glutamyl-tRNA(Asn/Gln) amidotransferase subunit B (479 aa).

Belongs to the GatB/GatE family. GatB subfamily. In terms of assembly, heterotrimer of A, B and C subunits.

The catalysed reaction is L-glutamyl-tRNA(Gln) + L-glutamine + ATP + H2O = L-glutaminyl-tRNA(Gln) + L-glutamate + ADP + phosphate + H(+). The enzyme catalyses L-aspartyl-tRNA(Asn) + L-glutamine + ATP + H2O = L-asparaginyl-tRNA(Asn) + L-glutamate + ADP + phosphate + 2 H(+). In terms of biological role, allows the formation of correctly charged Asn-tRNA(Asn) or Gln-tRNA(Gln) through the transamidation of misacylated Asp-tRNA(Asn) or Glu-tRNA(Gln) in organisms which lack either or both of asparaginyl-tRNA or glutaminyl-tRNA synthetases. The reaction takes place in the presence of glutamine and ATP through an activated phospho-Asp-tRNA(Asn) or phospho-Glu-tRNA(Gln). The polypeptide is Aspartyl/glutamyl-tRNA(Asn/Gln) amidotransferase subunit B (Mycoplasma mycoides subsp. mycoides SC (strain CCUG 32753 / NCTC 10114 / PG1)).